We begin with the raw amino-acid sequence, 1503 residues long: Translocase of chloroplast 159, chloroplastic (1503 aa).

Polar residues predominate over residues Met-1–Thr-24. The disordered stretch occupies residues Met-1–Ser-210. A helical membrane pass occupies residues Ser-21–Ala-37. Ser-71 is modified (phosphoserine). 2 stretches are compositionally biased toward basic and acidic residues: residues Lys-85–Ser-98 and Ser-176–Ser-210. Phosphoserine is present on residues Ser-210, Ser-281, and Ser-288. Disordered regions lie at residues Lys-298 to Lys-338 and Val-429 to Asp-464. Residues Glu-447–Gly-456 show a composition bias toward basic and acidic residues. Residues Ser-448, Ser-461, Ser-589, Ser-609, Ser-630, Ser-632, and Ser-665 each carry the phosphoserine modification. The disordered stretch occupies residues Phe-610–Glu-633. Residues Glu-781–Leu-804 adopt a coiled-coil conformation. The AIG1-type G domain maps to Ile-853–Lys-1087. Residues Gly-862–Ser-869 are G1. GTP is bound by residues Gly-865–Ala-870 and Asp-884–Ser-889. A Mg(2+)-binding site is contributed by Ser-869. The homodimerization stretch occupies residues Asp-884 to Gly-887. A G2 region spans residues Ser-889–Val-893. The segment at Asp-909–Gly-912 is G3. The tract at residues Arg-947 to Thr-952 is homodimerization. Residues Thr-981 to Ala-984 are G4. Residues His-982 and Glu-1035–Asn-1036 each bind GTP. Positions Glu-1035 to His-1037 are G5. Positions Asp-1175–Leu-1203 form a coiled coil. The interval Leu-1203–Pro-1222 is disordered.

This sequence belongs to the TRAFAC class TrmE-Era-EngA-EngB-Septin-like GTPase superfamily. AIG1/Toc34/Toc159-like paraseptin GTPase family. TOC159 subfamily. In terms of assembly, homodimer and heterodimer with TOC33. Part of the TOC core complex that includes 1 protein for the specific recognition of transit peptides surrounded by a ring composed of four proteins forming translocation channels, and four to five GTP-binding proteins providing energy. This core complex can interact with components of the TIC complex to form a larger import complex. Chloroplastic protein precursor such as prSS (precursor of the RuBisCO small subunit) interacts with these complexes. The TOC complex contains a specific subset of polar lipids such as digalactosyldiacylglyceride (DGDG), phosphatidylcholine (PC) and phosphatidylglycerol (PG). Interacts with SP1. Mg(2+) serves as cofactor. In terms of processing, phosphorylated by KOC1.

Its subcellular location is the plastid. It is found in the chloroplast outer membrane. The protein resides in the cytoplasm. Functionally, GTPase involved in protein precursor import into chloroplasts. Seems to recognize chloroplast-destined precursor proteins and regulate their presentation to the translocation channel through GTP hydrolysis. Required for chloroplast biogenesis. Probably specialized in the import of nuclear encoded photosynthetic preproteins from the cytoplasm to the chloroplast. The chain is Translocase of chloroplast 159, chloroplastic from Arabidopsis thaliana (Mouse-ear cress).